The primary structure comprises 536 residues: 1,4-beta-D-glucan cellobiohydrolase B (536 aa).

The N-terminal stretch at 1-21 (MSSFQIYRAALLLSILATANA) is a signal peptide. Residues 22–458 (QQVGTYTTET…SNIKFGPIGS (437 aa)) form a catalytic region. The active-site Nucleophile is the E233. E238 (proton donor) is an active-site residue. N-linked (GlcNAc...) asparagine glycosylation is found at N351 and N414. The segment at 459–500 (TYSSGSSSGSGSSSSSSSTTTKATSTTLKTTSTTSSGSSSTS) is ser/Thr-rich linker. Residues 464-499 (SSSGSGSSSSSSSTTTKATSTTLKTTSTTSSGSSST) form a disordered region. A CBM1 domain is found at 500 to 536 (SAAQAYGQCGGQGWTGPTTCVSGYTCTYENAYYSQCL). 2 disulfide bridges follow: C508/C525 and C519/C535.

Belongs to the glycosyl hydrolase 7 (cellulase C) family.

It is found in the secreted. It catalyses the reaction Hydrolysis of (1-&gt;4)-beta-D-glucosidic linkages in cellulose and cellotetraose, releasing cellobiose from the non-reducing ends of the chains.. Its function is as follows. The biological conversion of cellulose to glucose generally requires three types of hydrolytic enzymes: (1) Endoglucanases which cut internal beta-1,4-glucosidic bonds; (2) Exocellobiohydrolases that cut the disaccharide cellobiose from the non-reducing end of the cellulose polymer chain; (3) Beta-1,4-glucosidases which hydrolyze the cellobiose and other short cello-oligosaccharides to glucose. This is 1,4-beta-D-glucan cellobiohydrolase B (cbhB) from Aspergillus niger.